Consider the following 165-residue polypeptide: Austinoid biosynthesis cluster protein J (165 aa).

Belongs to the trt14 isomerase family. Homodimer.

It functions in the pathway secondary metabolite biosynthesis; terpenoid biosynthesis. In terms of biological role, part of the gene cluster that mediates the biosynthesis of calidodehydroaustin, a fungal meroterpenoid. The first step of the pathway is the synthesis of 3,5-dimethylorsellinic acid by the polyketide synthase ausA. 3,5-dimethylorsellinic acid is then prenylated by the polyprenyl transferase ausN. Further epoxidation by the FAD-dependent monooxygenase ausM and cyclization by the probable terpene cyclase ausL lead to the formation of protoaustinoid A. Protoaustinoid A is then oxidized to spiro-lactone preaustinoid A3 by the combined action of the FAD-binding monooxygenases ausB and ausC, and the dioxygenase ausE. Acid-catalyzed keto-rearrangement and ring contraction of the tetraketide portion of preaustinoid A3 by ausJ lead to the formation of preaustinoid A4. The aldo-keto reductase ausK, with the help of ausH, is involved in the next step by transforming preaustinoid A4 into isoaustinone which is in turn hydroxylated by the P450 monooxygenase ausI to form austinolide. The cytochrome P450 monooxygenase ausG modifies austinolide to austinol. Austinol is further acetylated to austin by the O-acetyltransferase ausP, which spontaneously changes to dehydroaustin. The cytochrome P450 monooxygenase ausR then converts dehydroaustin is into 7-dehydrodehydroaustin. The hydroxylation catalyzed by ausR permits the O-acetyltransferase ausQ to add an additional acetyl group to the molecule, leading to the formation of acetoxydehydroaustin. The short chain dehydrogenase ausT catalyzes the reduction of the double bond present between carbon atoms 1 and 2 to convert 7-dehydrodehydroaustin into 1,2-dihydro-7-hydroxydehydroaustin. AusQ catalyzes not only an acetylation reaction but also the addition of the PKS ausV diketide product to 1,2-dihydro-7-hydroxydehydroaustin, forming precalidodehydroaustin. Finally, the iron/alpha-ketoglutarate-dependent dioxygenase converts precalidodehydroaustin into calidodehydroaustin. The sequence is that of Austinoid biosynthesis cluster protein J from Aspergillus calidoustus.